A 428-amino-acid polypeptide reads, in one-letter code: Glutamate-1-semialdehyde 2,1-aminomutase (428 aa).

Residue K267 is modified to N6-(pyridoxal phosphate)lysine.

This sequence belongs to the class-III pyridoxal-phosphate-dependent aminotransferase family. HemL subfamily. In terms of assembly, homodimer. Pyridoxal 5'-phosphate serves as cofactor.

The protein localises to the cytoplasm. It catalyses the reaction (S)-4-amino-5-oxopentanoate = 5-aminolevulinate. Its pathway is porphyrin-containing compound metabolism; protoporphyrin-IX biosynthesis; 5-aminolevulinate from L-glutamyl-tRNA(Glu): step 2/2. The sequence is that of Glutamate-1-semialdehyde 2,1-aminomutase from Desulforapulum autotrophicum (strain ATCC 43914 / DSM 3382 / VKM B-1955 / HRM2) (Desulfobacterium autotrophicum).